Here is a 478-residue protein sequence, read N- to C-terminus: Zinc finger and SCAN domain-containing protein 26 (478 aa).

Residue lysine 17 forms a Glycyl lysine isopeptide (Lys-Gly) (interchain with G-Cter in SUMO2) linkage. In terms of domain architecture, SCAN box spans cysteine 51–leucine 133. Disordered regions lie at residues glycine 159 to glutamate 181 and glutamate 200 to lysine 226. 2 stretches are compositionally biased toward basic and acidic residues: residues glutamine 164–glutamate 181 and glutamate 207–lysine 226. The segment at tyrosine 231–histidine 253 adopts a C2H2-type 1; degenerate zinc-finger fold. 7 C2H2-type zinc fingers span residues histidine 282–histidine 304, tyrosine 310–histidine 332, tyrosine 338–histidine 360, cysteine 366–histidine 388, histidine 394–histidine 416, phenylalanine 422–histidine 444, and tyrosine 450–histidine 472.

Its subcellular location is the nucleus. May be involved in transcriptional regulation. The sequence is that of Zinc finger and SCAN domain-containing protein 26 (ZSCAN26) from Homo sapiens (Human).